The chain runs to 543 residues: Chaperonin GroEL 1 (543 aa).

Residues 29–32, lysine 50, 86–90, glycine 414, and aspartate 493 each bind ATP; these read TLGP and DGTTT. Residues 524–543 form a disordered region; that stretch reads KEDKGAPAGMGGMPPGGGMY. Gly residues predominate over residues 531-543; sequence AGMGGMPPGGGMY.

The protein belongs to the chaperonin (HSP60) family. As to quaternary structure, forms a cylinder of 14 subunits composed of two heptameric rings stacked back-to-back. Interacts with the co-chaperonin GroES.

Its subcellular location is the cytoplasm. It catalyses the reaction ATP + H2O + a folded polypeptide = ADP + phosphate + an unfolded polypeptide.. Functionally, together with its co-chaperonin GroES, plays an essential role in assisting protein folding. The GroEL-GroES system forms a nano-cage that allows encapsulation of the non-native substrate proteins and provides a physical environment optimized to promote and accelerate protein folding. The protein is Chaperonin GroEL 1 of Syntrophobacter fumaroxidans (strain DSM 10017 / MPOB).